A 377-amino-acid chain; its full sequence is 4-hydroxy-3-methylbut-2-en-1-yl diphosphate synthase (flavodoxin) (377 aa).

The [4Fe-4S] cluster site is built by Cys270, Cys273, Cys305, and Glu312.

It belongs to the IspG family. [4Fe-4S] cluster serves as cofactor.

The catalysed reaction is (2E)-4-hydroxy-3-methylbut-2-enyl diphosphate + oxidized [flavodoxin] + H2O + 2 H(+) = 2-C-methyl-D-erythritol 2,4-cyclic diphosphate + reduced [flavodoxin]. It participates in isoprenoid biosynthesis; isopentenyl diphosphate biosynthesis via DXP pathway; isopentenyl diphosphate from 1-deoxy-D-xylulose 5-phosphate: step 5/6. Its function is as follows. Converts 2C-methyl-D-erythritol 2,4-cyclodiphosphate (ME-2,4cPP) into 1-hydroxy-2-methyl-2-(E)-butenyl 4-diphosphate. In Bacillus subtilis (strain 168), this protein is 4-hydroxy-3-methylbut-2-en-1-yl diphosphate synthase (flavodoxin).